The sequence spans 284 residues: D-tagatose-1,6-bisphosphate aldolase subunit GatY (284 aa).

The active-site Proton donor is aspartate 82. Residues histidine 83 and histidine 180 each contribute to the Zn(2+) site. Glycine 181 contacts dihydroxyacetone phosphate. Histidine 208 contacts Zn(2+). Residues 209–211 (GAS) and 230–233 (NVAT) each bind dihydroxyacetone phosphate.

The protein belongs to the class II fructose-bisphosphate aldolase family. TagBP aldolase GatY subfamily. Forms a complex with GatZ. Zn(2+) is required as a cofactor.

It catalyses the reaction D-tagatofuranose 1,6-bisphosphate = D-glyceraldehyde 3-phosphate + dihydroxyacetone phosphate. The protein operates within carbohydrate metabolism; D-tagatose 6-phosphate degradation; D-glyceraldehyde 3-phosphate and glycerone phosphate from D-tagatose 6-phosphate: step 2/2. Catalytic subunit of the tagatose-1,6-bisphosphate aldolase GatYZ, which catalyzes the reversible aldol condensation of dihydroxyacetone phosphate (DHAP or glycerone-phosphate) with glyceraldehyde 3-phosphate (G3P) to produce tagatose 1,6-bisphosphate (TBP). Requires GatZ subunit for full activity and stability. Is involved in the catabolism of galactitol. This Escherichia coli O139:H28 (strain E24377A / ETEC) protein is D-tagatose-1,6-bisphosphate aldolase subunit GatY.